The following is a 491-amino-acid chain: Cytochrome P450 2F2 (491 aa).

Heme is bound at residue Cys-436.

It belongs to the cytochrome P450 family. Heme serves as cofactor.

It localises to the endoplasmic reticulum membrane. The protein resides in the microsome membrane. Functionally, involved in the regio- and stereoselective transformation of naphthalene to trans-1R-hydroxy-2R-glutathionyl-1,2-dihydronaphthalene in the presence of glutathione and glutathione S-transferases. It specifically catalyzes the production of a very reactive and potentially toxic intermediate, the 2R,2S arene oxide, that is associated with necrosis of the unciliated bronchiolar epithelial cells or club cells in lung. The chain is Cytochrome P450 2F2 (Cyp2f2) from Rattus norvegicus (Rat).